The following is a 181-amino-acid chain: Large ribosomal subunit protein uL16 (181 aa).

This sequence belongs to the universal ribosomal protein uL16 family.

In Pyrococcus horikoshii (strain ATCC 700860 / DSM 12428 / JCM 9974 / NBRC 100139 / OT-3), this protein is Large ribosomal subunit protein uL16.